The chain runs to 311 residues: Histidine decarboxylase proenzyme (311 aa).

Residues D64 and S82 each coordinate substrate. The residue at position 83 (S83) is a Pyruvic acid (Ser). E198 functions as the Proton donor in the catalytic mechanism.

As to quaternary structure, the proenzyme is a hexamer of identical pi chains; each pi chain monomer is cleaved to form a small (or beta) chain and a large (or alpha) chain by non-hydrolytic self-catalysis. Pyruvate serves as cofactor.

It catalyses the reaction L-histidine + H(+) = histamine + CO2. The polypeptide is Histidine decarboxylase proenzyme (hdcA) (Lactobacillus sp. (strain 30a)).